Consider the following 959-residue polypeptide: Glycine dehydrogenase (decarboxylating) (959 aa).

The residue at position 708 (K708) is an N6-(pyridoxal phosphate)lysine.

The protein belongs to the GcvP family. The glycine cleavage system is composed of four proteins: P, T, L and H. The cofactor is pyridoxal 5'-phosphate.

The enzyme catalyses N(6)-[(R)-lipoyl]-L-lysyl-[glycine-cleavage complex H protein] + glycine + H(+) = N(6)-[(R)-S(8)-aminomethyldihydrolipoyl]-L-lysyl-[glycine-cleavage complex H protein] + CO2. In terms of biological role, the glycine cleavage system catalyzes the degradation of glycine. The P protein binds the alpha-amino group of glycine through its pyridoxal phosphate cofactor; CO(2) is released and the remaining methylamine moiety is then transferred to the lipoamide cofactor of the H protein. The sequence is that of Glycine dehydrogenase (decarboxylating) from Serratia proteamaculans (strain 568).